The sequence spans 203 residues: LexA repressor (203 aa).

A DNA-binding region (H-T-H motif) is located at residues 30-50 (VREICQAVSLKSTSTVHGHLK). Catalysis depends on for autocatalytic cleavage activity residues S127 and K164.

This sequence belongs to the peptidase S24 family. In terms of assembly, homodimer.

It carries out the reaction Hydrolysis of Ala-|-Gly bond in repressor LexA.. In terms of biological role, represses a number of genes involved in the response to DNA damage (SOS response), including recA and lexA. In the presence of single-stranded DNA, RecA interacts with LexA causing an autocatalytic cleavage which disrupts the DNA-binding part of LexA, leading to derepression of the SOS regulon and eventually DNA repair. The sequence is that of LexA repressor from Clostridium perfringens (strain ATCC 13124 / DSM 756 / JCM 1290 / NCIMB 6125 / NCTC 8237 / Type A).